We begin with the raw amino-acid sequence, 311 residues long: Protoheme IX farnesyltransferase 1 (311 aa).

Transmembrane regions (helical) follow at residues 31-51 (VMAL…GAVN), 52-72 (PVIA…AGAL), 97-117 (VTPG…VMTL), 119-139 (VLVG…YIVI), 152-172 (IVIG…AATG), 179-199 (LVLF…LALF), 225-245 (ILAY…FGFT), 247-267 (GYYG…SWKV), and 281-301 (LFAY…ADTI).

Belongs to the UbiA prenyltransferase family. Protoheme IX farnesyltransferase subfamily.

The protein localises to the cell inner membrane. It catalyses the reaction heme b + (2E,6E)-farnesyl diphosphate + H2O = Fe(II)-heme o + diphosphate. It participates in porphyrin-containing compound metabolism; heme O biosynthesis; heme O from protoheme: step 1/1. Functionally, converts heme B (protoheme IX) to heme O by substitution of the vinyl group on carbon 2 of heme B porphyrin ring with a hydroxyethyl farnesyl side group. This chain is Protoheme IX farnesyltransferase 1, found in Mesorhizobium japonicum (strain LMG 29417 / CECT 9101 / MAFF 303099) (Mesorhizobium loti (strain MAFF 303099)).